An 880-amino-acid chain; its full sequence is Nonsense-mediated mRNA decay factor SMG7-like (880 aa).

2 TPR repeats span residues 149-183 and 184-217; these read QEQY…NPHN and QLAV…GASN. The interval 669–711 is disordered; it reads RLGLSKPNGLGPIDETGPVSAFDSLSINSSTEHPASSYSPPTP. Positions 691–701 are enriched in polar residues; sequence DSLSINSSTEH.

Its function is as follows. May play a role in growth and development. This Arabidopsis thaliana (Mouse-ear cress) protein is Nonsense-mediated mRNA decay factor SMG7-like.